A 287-amino-acid chain; its full sequence is MSQKEIWYETLHANFGQYFSVDRVLYHEKTDHQDLIIFENDALGRVMALDGVVQTTERDEFIYHEMLTHVPLLSHGNAKRVLIIGGGDGGMLREVSRHHGVEHITMVEIDAGVVEFCRQYLPNHSAGSYDDPRFNLVIDDGVNFVRQCSDKFDVIISDCTDPIGPGESLFTSDFYQGCARCLNEGGIFVAQNGVCFLQQDEAVGSHKKLGHYFKDVSFYQAAIPTYYGGIMTFAWASNNPALRQIDATTLRQRFAQSGITCRYYTPDVHIGSFALPQYLLSALQNAQ.

The 234-residue stretch at 5–238 folds into the PABS domain; that stretch reads EIWYETLHAN…GIMTFAWASN (234 aa). Position 33 (Q33) interacts with S-methyl-5'-thioadenosine. Spermidine is bound by residues H64 and D88. Residues E108 and 140–141 each bind S-methyl-5'-thioadenosine; that span reads DG. The Proton acceptor role is filled by D158. Residue 158 to 161 coordinates spermidine; sequence DCTD. P165 serves as a coordination point for S-methyl-5'-thioadenosine.

The protein belongs to the spermidine/spermine synthase family. Homodimer or homotetramer.

Its subcellular location is the cytoplasm. The enzyme catalyses S-adenosyl 3-(methylsulfanyl)propylamine + putrescine = S-methyl-5'-thioadenosine + spermidine + H(+). Its pathway is amine and polyamine biosynthesis; spermidine biosynthesis; spermidine from putrescine: step 1/1. In terms of biological role, catalyzes the irreversible transfer of a propylamine group from the amino donor S-adenosylmethioninamine (decarboxy-AdoMet) to putrescine (1,4-diaminobutane) to yield spermidine. The chain is Polyamine aminopropyltransferase from Pectobacterium carotovorum subsp. carotovorum (strain PC1).